A 63-amino-acid polypeptide reads, in one-letter code: Lantipeptide Flvbeta.a (63 aa).

Positions 1-28 are cleaved as a propeptide — cleaved by FlvT; it reads MSEKNMEKAGVVKADELDEMIDETTGGA. Residues Thr30, Thr33, Thr38, and Thr39 each carry the 2,3-didehydrobutyrine; by FlvM2 modification. Residues 43–49 constitute a cross-link (lanthionine (Ser-Cys); by FlvM2); sequence SKGLQNC. Thr54 and Thr55 each carry 2,3-didehydrobutyrine; by FlvM2.

Maturation of FlvA2 peptides involves the enzymatic conversion of Thr, and Ser into dehydrated AA and the formation of thioether bonds with cysteines. Modifications are processed by the flavecin synthetase FlvM2. This is followed by membrane translocation and cleavage of the modified precursor. In terms of processing, contains DL-lanthionine, when coepressed in E.coli with the flavecin synthetase FlvM2.

The protein localises to the secreted. In terms of biological role, lanthionine-containing peptide that does probably not show antibacterial activity, since its analog [+3]Flvbeta.a does not show antibacterial activity against M.luteus. Also does not show antibiotic activity when tested with [Del2]Flvalpha.a, an analog of Flvalpha.a, which is encoded by the same operon than Flvbeta.a. The bactericidal activity of lantibiotics is based on depolarization of energized bacterial cytoplasmic membranes, initiated by the formation of aqueous transmembrane pores. In Ruminococcus flavefaciens, this protein is Lantipeptide Flvbeta.a.